A 357-amino-acid polypeptide reads, in one-letter code: Peptide chain release factor 1 (357 aa).

Gln236 is subject to N5-methylglutamine.

Belongs to the prokaryotic/mitochondrial release factor family. Post-translationally, methylated by PrmC. Methylation increases the termination efficiency of RF1.

It is found in the cytoplasm. Peptide chain release factor 1 directs the termination of translation in response to the peptide chain termination codons UAG and UAA. This chain is Peptide chain release factor 1, found in Mycobacterium ulcerans (strain Agy99).